The following is a 354-amino-acid chain: tRNA dimethylallyltransferase (354 aa).

28–35 contacts ATP; the sequence is GPTATGKS. 30 to 35 serves as a coordination point for substrate; the sequence is TATGKS. The interaction with substrate tRNA stretch occupies residues 53 to 56; the sequence is DSRQ.

This sequence belongs to the IPP transferase family. As to quaternary structure, monomer. Mg(2+) serves as cofactor.

It carries out the reaction adenosine(37) in tRNA + dimethylallyl diphosphate = N(6)-dimethylallyladenosine(37) in tRNA + diphosphate. Catalyzes the transfer of a dimethylallyl group onto the adenine at position 37 in tRNAs that read codons beginning with uridine, leading to the formation of N6-(dimethylallyl)adenosine (i(6)A). The chain is tRNA dimethylallyltransferase from Synechococcus sp. (strain JA-2-3B'a(2-13)) (Cyanobacteria bacterium Yellowstone B-Prime).